Here is a 122-residue protein sequence, read N- to C-terminus: Double-headed protease inhibitor, submandibular gland (122 aa).

Kazal-like domains lie at 10 to 70 (GGRK…NCDI) and 71 to 121 (ECTQ…QCES). 6 disulfides stabilise this stretch: Cys-16-Cys-50, Cys-28-Cys-47, Cys-36-Cys-68, Cys-72-Cys-101, Cys-79-Cys-98, and Cys-87-Cys-119.

The protein localises to the secreted. This inhibitor is composed of two homologous actively inhibiting halves: one which inhibits trypsin, the other which inhibits elastase. This chain is Double-headed protease inhibitor, submandibular gland, found in Meles meles (Eurasian badger).